The sequence spans 87 residues: Small ribosomal subunit protein uS17 (87 aa).

It belongs to the universal ribosomal protein uS17 family. Part of the 30S ribosomal subunit.

One of the primary rRNA binding proteins, it binds specifically to the 5'-end of 16S ribosomal RNA. In Oceanobacillus iheyensis (strain DSM 14371 / CIP 107618 / JCM 11309 / KCTC 3954 / HTE831), this protein is Small ribosomal subunit protein uS17.